The primary structure comprises 522 residues: Peptide methionine sulfoxide reductase MsrA/MsrB (522 aa).

The 158-residue stretch at 17-174 (LALGACSPKI…ALALIRDPNA (158 aa)) folds into the Thioredoxin domain. C68 and C71 are oxidised to a cystine. The segment at 199-354 (RTIYLAGGCF…PNGYCHIDIR (156 aa)) is peptide methionine sulfoxide reductase A. The active site involves C207. The MsrB domain maps to 383 to 506 (DAELKRTLTE…NGASLKFIPL (124 aa)). A disulfide bridge links C440 with C495. Residue C495 is the Nucleophile of the active site.

In the N-terminal section; belongs to the thioredoxin family. This sequence in the central section; belongs to the MsrA Met sulfoxide reductase family. It in the C-terminal section; belongs to the MsrB Met sulfoxide reductase family.

The enzyme catalyses L-methionyl-[protein] + [thioredoxin]-disulfide + H2O = L-methionyl-(S)-S-oxide-[protein] + [thioredoxin]-dithiol. The catalysed reaction is [thioredoxin]-disulfide + L-methionine + H2O = L-methionine (S)-S-oxide + [thioredoxin]-dithiol. It carries out the reaction L-methionyl-[protein] + [thioredoxin]-disulfide + H2O = L-methionyl-(R)-S-oxide-[protein] + [thioredoxin]-dithiol. Functionally, has an important function as a repair enzyme for proteins that have been inactivated by oxidation. Catalyzes the reversible oxidation-reduction of methionine sulfoxide in proteins to methionine. This chain is Peptide methionine sulfoxide reductase MsrA/MsrB (msrAB), found in Neisseria meningitidis serogroup B (strain ATCC BAA-335 / MC58).